A 242-amino-acid chain; its full sequence is Ribonuclease 3 (242 aa).

Residues 7–136 enclose the RNase III domain; that stretch reads LEALQNLLGY…LLASIYLDGG (130 aa). Glu-49 serves as a coordination point for Mg(2+). Asp-53 is an active-site residue. 2 residues coordinate Mg(2+): Asp-122 and Glu-125. Glu-125 is a catalytic residue. The 70-residue stretch at 167-236 folds into the DRBM domain; the sequence is DYKTQLQELT…AEKALQIIAA (70 aa).

This sequence belongs to the ribonuclease III family. Homodimer. Requires Mg(2+) as cofactor.

Its subcellular location is the cytoplasm. The catalysed reaction is Endonucleolytic cleavage to 5'-phosphomonoester.. Its function is as follows. Digests double-stranded RNA. Involved in the processing of primary rRNA transcript to yield the immediate precursors to the large and small rRNAs (23S and 16S). Processes some mRNAs, and tRNAs when they are encoded in the rRNA operon. Processes pre-crRNA and tracrRNA of type II CRISPR loci if present in the organism. The chain is Ribonuclease 3 from Syntrophobacter fumaroxidans (strain DSM 10017 / MPOB).